The chain runs to 403 residues: Enoyl-[acyl-carrier-protein] reductase [NADH] (403 aa).

Residues 49 to 54 (GASSGY), 75 to 76 (FE), 112 to 113 (DA), and 141 to 142 (LA) contribute to the NAD(+) site. Tyr-227 provides a ligand contact to substrate. Catalysis depends on Tyr-237, which acts as the Proton donor. NAD(+) contacts are provided by residues Lys-246 and 276 to 278 (VVT).

Belongs to the TER reductase family. In terms of assembly, monomer.

The enzyme catalyses a 2,3-saturated acyl-[ACP] + NAD(+) = a (2E)-enoyl-[ACP] + NADH + H(+). It functions in the pathway lipid metabolism; fatty acid biosynthesis. In terms of biological role, involved in the final reduction of the elongation cycle of fatty acid synthesis (FAS II). Catalyzes the reduction of a carbon-carbon double bond in an enoyl moiety that is covalently linked to an acyl carrier protein (ACP). This is Enoyl-[acyl-carrier-protein] reductase [NADH] from Pseudomonas putida (strain GB-1).